A 339-amino-acid chain; its full sequence is 3-isopropylmalate dehydrogenase (339 aa).

Substrate is bound by residues arginine 88, arginine 98, arginine 122, and aspartate 212. Residues aspartate 212, aspartate 236, and aspartate 240 each contribute to the Mg(2+) site. 272 to 284 contacts NAD(+); that stretch reads GSAPDIAGQGIAD.

The protein belongs to the isocitrate and isopropylmalate dehydrogenases family. LeuB type 2 subfamily. Homodimer. It depends on Mg(2+) as a cofactor. Mn(2+) is required as a cofactor.

Its subcellular location is the cytoplasm. The catalysed reaction is (2R,3S)-3-isopropylmalate + NAD(+) = 4-methyl-2-oxopentanoate + CO2 + NADH. Its pathway is amino-acid biosynthesis; L-leucine biosynthesis; L-leucine from 3-methyl-2-oxobutanoate: step 3/4. Functionally, catalyzes the oxidation of 3-carboxy-2-hydroxy-4-methylpentanoate (3-isopropylmalate) to 3-carboxy-4-methyl-2-oxopentanoate. The product decarboxylates to 4-methyl-2 oxopentanoate. The protein is 3-isopropylmalate dehydrogenase of Corynebacterium urealyticum (strain ATCC 43042 / DSM 7109).